A 223-amino-acid polypeptide reads, in one-letter code: Phosphoglycolate phosphatase (223 aa).

Asp-10 functions as the Nucleophile in the catalytic mechanism. Asp-10 and Asp-12 together coordinate Mg(2+). Lys-149 serves as a coordination point for substrate. Residues Asp-172 and Asp-176 each coordinate Mg(2+).

Belongs to the archaeal SPP-like hydrolase family. Mg(2+) serves as cofactor.

The enzyme catalyses 2-phosphoglycolate + H2O = glycolate + phosphate. Its function is as follows. Catalyzes the dephosphorylation of 2-phosphoglycolate. This Archaeoglobus fulgidus (strain ATCC 49558 / DSM 4304 / JCM 9628 / NBRC 100126 / VC-16) protein is Phosphoglycolate phosphatase.